The primary structure comprises 210 residues: Thiamine-phosphate synthase (210 aa).

4-amino-2-methyl-5-(diphosphooxymethyl)pyrimidine contacts are provided by residues 38 to 42 (QLREK) and Asn-70. Asp-71 and Asp-90 together coordinate Mg(2+). Residue Ser-109 coordinates 4-amino-2-methyl-5-(diphosphooxymethyl)pyrimidine. Position 139–141 (139–141 (TPT)) interacts with 2-[(2R,5Z)-2-carboxy-4-methylthiazol-5(2H)-ylidene]ethyl phosphate. Lys-142 provides a ligand contact to 4-amino-2-methyl-5-(diphosphooxymethyl)pyrimidine. 2-[(2R,5Z)-2-carboxy-4-methylthiazol-5(2H)-ylidene]ethyl phosphate contacts are provided by residues Gly-170 and 190–191 (VS).

It belongs to the thiamine-phosphate synthase family. Mg(2+) is required as a cofactor.

It catalyses the reaction 2-[(2R,5Z)-2-carboxy-4-methylthiazol-5(2H)-ylidene]ethyl phosphate + 4-amino-2-methyl-5-(diphosphooxymethyl)pyrimidine + 2 H(+) = thiamine phosphate + CO2 + diphosphate. It carries out the reaction 2-(2-carboxy-4-methylthiazol-5-yl)ethyl phosphate + 4-amino-2-methyl-5-(diphosphooxymethyl)pyrimidine + 2 H(+) = thiamine phosphate + CO2 + diphosphate. The catalysed reaction is 4-methyl-5-(2-phosphooxyethyl)-thiazole + 4-amino-2-methyl-5-(diphosphooxymethyl)pyrimidine + H(+) = thiamine phosphate + diphosphate. It functions in the pathway cofactor biosynthesis; thiamine diphosphate biosynthesis; thiamine phosphate from 4-amino-2-methyl-5-diphosphomethylpyrimidine and 4-methyl-5-(2-phosphoethyl)-thiazole: step 1/1. Its function is as follows. Condenses 4-methyl-5-(beta-hydroxyethyl)thiazole monophosphate (THZ-P) and 2-methyl-4-amino-5-hydroxymethyl pyrimidine pyrophosphate (HMP-PP) to form thiamine monophosphate (TMP). The polypeptide is Thiamine-phosphate synthase (Leptospira biflexa serovar Patoc (strain Patoc 1 / Ames)).